The primary structure comprises 357 residues: Phosphoribosylformylglycinamidine cyclo-ligase (357 aa).

This sequence belongs to the AIR synthase family.

The protein localises to the cytoplasm. The enzyme catalyses 2-formamido-N(1)-(5-O-phospho-beta-D-ribosyl)acetamidine + ATP = 5-amino-1-(5-phospho-beta-D-ribosyl)imidazole + ADP + phosphate + H(+). It participates in purine metabolism; IMP biosynthesis via de novo pathway; 5-amino-1-(5-phospho-D-ribosyl)imidazole from N(2)-formyl-N(1)-(5-phospho-D-ribosyl)glycinamide: step 2/2. The polypeptide is Phosphoribosylformylglycinamidine cyclo-ligase (Nitrobacter winogradskyi (strain ATCC 25391 / DSM 10237 / CIP 104748 / NCIMB 11846 / Nb-255)).